The following is a 422-amino-acid chain: 5'-deoxyadenosine deaminase (422 aa).

Residues histidine 57 and histidine 59 each coordinate Zn(2+). Glutamate 86 and histidine 178 together coordinate substrate. Histidine 205 lines the Zn(2+) pocket. Positions 208 and 294 each coordinate substrate. Aspartate 294 contributes to the Zn(2+) binding site.

Belongs to the metallo-dependent hydrolases superfamily. MTA/SAH deaminase family. Homotetramer. Requires Zn(2+) as cofactor.

It catalyses the reaction 5'-deoxyadenosine + H2O + H(+) = 5'-deoxyinosine + NH4(+). It carries out the reaction S-adenosyl-L-homocysteine + H2O + H(+) = S-inosyl-L-homocysteine + NH4(+). The catalysed reaction is S-methyl-5'-thioadenosine + H2O + H(+) = S-methyl-5'-thioinosine + NH4(+). The enzyme catalyses adenosine + H2O + H(+) = inosine + NH4(+). It participates in amino-acid biosynthesis; S-adenosyl-L-methionine biosynthesis. Functionally, catalyzes the deamination of three SAM-derived enzymatic products, namely 5'-deoxyadenosine, S-adenosyl-L-homocysteine, and 5'-methylthioadenosine, to produce the inosine analogs. Can also deaminate adenosine. The preferred substrate for this enzyme is 5'-deoxyadenosine, but all these substrates are efficiently deaminated. Likely functions in a S-adenosyl-L-methionine (SAM) recycling pathway from S-adenosyl-L-homocysteine (SAH) produced from SAM-dependent methylation reactions. May also be involved in the recycling of 5'-deoxyadenosine, whereupon the 5'-deoxyribose moiety of 5'-deoxyinosine is further metabolized to deoxyhexoses used for the biosynthesis of aromatic amino acids in methanogens. The protein is 5'-deoxyadenosine deaminase of Methanococcus maripaludis (strain DSM 14266 / JCM 13030 / NBRC 101832 / S2 / LL).